We begin with the raw amino-acid sequence, 1225 residues long: DNA-directed RNA polymerase subunit beta' (1225 aa).

Zn(2+) is bound by residues Cys-60, Cys-62, Cys-75, and Cys-78. Asp-450, Asp-452, and Asp-454 together coordinate Mg(2+). Zn(2+) is bound by residues Cys-818, Cys-892, Cys-899, and Cys-902.

The protein belongs to the RNA polymerase beta' chain family. In terms of assembly, the RNAP catalytic core consists of 2 alpha, 1 beta, 1 beta' and 1 omega subunit. When a sigma factor is associated with the core the holoenzyme is formed, which can initiate transcription. Requires Mg(2+) as cofactor. Zn(2+) serves as cofactor.

The enzyme catalyses RNA(n) + a ribonucleoside 5'-triphosphate = RNA(n+1) + diphosphate. Its function is as follows. DNA-dependent RNA polymerase catalyzes the transcription of DNA into RNA using the four ribonucleoside triphosphates as substrates. This Streptococcus pneumoniae (strain P1031) protein is DNA-directed RNA polymerase subunit beta'.